The primary structure comprises 231 residues: Quercetin 2,3-dioxygenase (231 aa).

A divalent metal cation is bound by residues His-57, His-59, His-101, and Glu-103.

The protein belongs to the pirin family. The cofactor is Zn(2+). Co(2+) serves as cofactor. Fe(2+) is required as a cofactor.

The enzyme catalyses quercetin + O2 = 2-(3,4-dihydroxybenzoyloxy)-4,6-dihydroxybenzoate + CO. It participates in flavonoid metabolism; quercetin degradation. Its activity is regulated as follows. Inhibited by kojic acid, sodium diethyldithiocarbamate and 1,10-phenanthroline monohydrochloride. In terms of biological role, has quercetin 2,3-dioxygenase activity in vitro. Its physiological role is unknown; however, may provide a mechanism that would avoid inhibition of key cellular proteins, such as DNA gyrase, by quercetin. The protein is Quercetin 2,3-dioxygenase (yhhW) of Escherichia coli (strain K12).